The following is a 405-amino-acid chain: Phosphoglycerate kinase (405 aa).

Substrate contacts are provided by residues 24-26 (DFN), Arg-40, 63-66 (HLGR), Arg-122, and Arg-162. Residues Lys-212, Glu-331, and 361 to 364 (GGDS) each bind ATP.

It belongs to the phosphoglycerate kinase family. Monomer.

It localises to the cytoplasm. It catalyses the reaction (2R)-3-phosphoglycerate + ATP = (2R)-3-phospho-glyceroyl phosphate + ADP. The protein operates within carbohydrate degradation; glycolysis; pyruvate from D-glyceraldehyde 3-phosphate: step 2/5. The polypeptide is Phosphoglycerate kinase (Corynebacterium efficiens (strain DSM 44549 / YS-314 / AJ 12310 / JCM 11189 / NBRC 100395)).